Here is a 472-residue protein sequence, read N- to C-terminus: 3-isopropylmalate dehydratase large subunit (472 aa).

3 residues coordinate [4Fe-4S] cluster: C347, C407, and C410.

The protein belongs to the aconitase/IPM isomerase family. LeuC type 1 subfamily. As to quaternary structure, heterodimer of LeuC and LeuD. Requires [4Fe-4S] cluster as cofactor.

It catalyses the reaction (2R,3S)-3-isopropylmalate = (2S)-2-isopropylmalate. It functions in the pathway amino-acid biosynthesis; L-leucine biosynthesis; L-leucine from 3-methyl-2-oxobutanoate: step 2/4. Its function is as follows. Catalyzes the isomerization between 2-isopropylmalate and 3-isopropylmalate, via the formation of 2-isopropylmaleate. In Parasynechococcus marenigrum (strain WH8102), this protein is 3-isopropylmalate dehydratase large subunit.